A 221-amino-acid polypeptide reads, in one-letter code: 7-cyano-7-deazaguanine synthase (221 aa).

7–17 (LSGGMDSSTLA) is an ATP binding site. Zn(2+) contacts are provided by Cys187, Cys195, Cys198, and Cys201.

It belongs to the QueC family. Zn(2+) is required as a cofactor.

The enzyme catalyses 7-carboxy-7-deazaguanine + NH4(+) + ATP = 7-cyano-7-deazaguanine + ADP + phosphate + H2O + H(+). Its pathway is purine metabolism; 7-cyano-7-deazaguanine biosynthesis. In terms of biological role, catalyzes the ATP-dependent conversion of 7-carboxy-7-deazaguanine (CDG) to 7-cyano-7-deazaguanine (preQ(0)). This chain is 7-cyano-7-deazaguanine synthase, found in Methanosphaerula palustris (strain ATCC BAA-1556 / DSM 19958 / E1-9c).